The primary structure comprises 207 residues: Small ribosomal subunit protein uS4c (207 aa).

The tract at residues 22–51 is disordered; that stretch reads TQKNCTRDFPPGQHGPKKKGGGNQKTKESQ. The S4 RNA-binding domain maps to 97–158; that stretch reads MRLDTIIFRL…NSQNFVKNLL (62 aa).

Belongs to the universal ribosomal protein uS4 family. In terms of assembly, part of the 30S ribosomal subunit. Contacts protein S5. The interaction surface between S4 and S5 is involved in control of translational fidelity.

The protein localises to the plastid. The protein resides in the chloroplast. In terms of biological role, one of the primary rRNA binding proteins, it binds directly to 16S rRNA where it nucleates assembly of the body of the 30S subunit. With S5 and S12 plays an important role in translational accuracy. The polypeptide is Small ribosomal subunit protein uS4c (rps4) (Chlorella vulgaris (Green alga)).